A 653-amino-acid polypeptide reads, in one-letter code: Dual specificity protein kinase shkB (653 aa).

Positions 112–133 (NPNNNNNNSNNTNSSDSNQNYS) are disordered. The region spanning 174-432 (YNREAKLGSG…FAEISKQRIL (259 aa)) is the Protein kinase domain. ATP contacts are provided by residues 180–188 (LGSGAFGSV) and K201. D298 functions as the Proton acceptor in the catalytic mechanism. In terms of domain architecture, SH2 spans 534–625 (GFMAATSSKN…IKEPFEGGPF (92 aa)).

This sequence belongs to the protein kinase superfamily. TKL Ser/Thr protein kinase family. SH2 domain-containing protein kinase subfamily.

Its subcellular location is the membrane. It catalyses the reaction L-seryl-[protein] + ATP = O-phospho-L-seryl-[protein] + ADP + H(+). It carries out the reaction L-threonyl-[protein] + ATP = O-phospho-L-threonyl-[protein] + ADP + H(+). Functionally, required for proper chemotaxis and phagocytosis; proper spatiotemporal control of F-actin levels in chemotaxing cells. Negative regulator of the PI3K (phosphatidylinositol 3 kinase) pathway. Predominantly phosphorylates serines and threonines and tyrosines at a lower level. This is Dual specificity protein kinase shkB (shkB) from Dictyostelium discoideum (Social amoeba).